Here is a 374-residue protein sequence, read N- to C-terminus: tRNA-specific 2-thiouridylase MnmA (374 aa).

ATP contacts are provided by residues 13–20 (GMSGGVDS) and Met-39. Residues 99–101 (NPD) are interaction with target base in tRNA. Cys-104 acts as the Nucleophile in catalysis. A disulfide bridge connects residues Cys-104 and Cys-201. Gly-128 is a binding site for ATP. The interval 151–153 (KDQ) is interaction with tRNA. Cys-201 acts as the Cysteine persulfide intermediate in catalysis. Residues 313-314 (RY) form an interaction with tRNA region.

The protein belongs to the MnmA/TRMU family.

The protein localises to the cytoplasm. It carries out the reaction S-sulfanyl-L-cysteinyl-[protein] + uridine(34) in tRNA + AH2 + ATP = 2-thiouridine(34) in tRNA + L-cysteinyl-[protein] + A + AMP + diphosphate + H(+). In terms of biological role, catalyzes the 2-thiolation of uridine at the wobble position (U34) of tRNA, leading to the formation of s(2)U34. The sequence is that of tRNA-specific 2-thiouridylase MnmA from Streptococcus suis (strain 98HAH33).